Reading from the N-terminus, the 262-residue chain is Hydroxyethylthiazole kinase (262 aa).

M50 lines the substrate pocket. The ATP site is built by R125 and T171. G198 is a substrate binding site.

The protein belongs to the Thz kinase family. Mg(2+) is required as a cofactor.

It carries out the reaction 5-(2-hydroxyethyl)-4-methylthiazole + ATP = 4-methyl-5-(2-phosphooxyethyl)-thiazole + ADP + H(+). The protein operates within cofactor biosynthesis; thiamine diphosphate biosynthesis; 4-methyl-5-(2-phosphoethyl)-thiazole from 5-(2-hydroxyethyl)-4-methylthiazole: step 1/1. Catalyzes the phosphorylation of the hydroxyl group of 4-methyl-5-beta-hydroxyethylthiazole (THZ). The protein is Hydroxyethylthiazole kinase of Escherichia coli O17:K52:H18 (strain UMN026 / ExPEC).